The following is a 457-amino-acid chain: PDZ and LIM domain protein 7 (457 aa).

The PDZ domain maps to 1-85 (MDSFKVVLEG…RLSLGLSRAQ (85 aa)). Ser-78 is subject to Phosphoserine. Disordered regions lie at residues 82 to 142 (SRAQ…LVPD), 176 to 226 (TEFM…PWAV), and 239 to 258 (TSTVLTRHSQPATPTPLQSR). Asymmetric dimethylarginine is present on Arg-103. Residue Ser-111 is modified to Phosphoserine. Positions 208 to 221 (EPWPGPTAPSPTSR) are enriched in pro residues. A Phosphoserine modification is found at Ser-247. LIM zinc-binding domains lie at 280 to 338 (PVCH…VRYA), 339 to 398 (PSCA…MFGT), and 399 to 457 (KCHG…FSHV).

In terms of assembly, binds via its LIM zinc-binding 3 domain (LIM 3) to endocytic codes of INSR, but not with those of IGF1R, LDLR, TFRC, or EGFR. Interacts with various PKC isoforms through the LIM zinc-binding domains. Binds to RET in a phosphorylation-independent manner via its LIM zinc-binding domain 2 (LIM 2). Probably part of a complex with SHC and the RET dimer. Interacts with TPM2. Interacts with TBX4 and TBX5. In terms of tissue distribution, isoform 1 and isoform 2 are expressed ubiquitously, however, isoform 2 predominates in skeletal muscle, isoform 1 is more abundant in lung, spleen, leukocytes and fetal liver.

It localises to the cytoplasm. It is found in the cytoskeleton. Its function is as follows. May function as a scaffold on which the coordinated assembly of proteins can occur. May play a role as an adapter that, via its PDZ domain, localizes LIM-binding proteins to actin filaments of both skeletal muscle and nonmuscle tissues. Involved in both of the two fundamental mechanisms of bone formation, direct bone formation (e.g. embryonic flat bones mandible and cranium), and endochondral bone formation (e.g. embryonic long bone development). Plays a role during fracture repair. Involved in BMP6 signaling pathway. This Homo sapiens (Human) protein is PDZ and LIM domain protein 7 (PDLIM7).